The primary structure comprises 225 residues: Transmembrane protein C16orf54 homolog (225 aa).

The helical transmembrane segment at 34–54 threads the bilayer; sequence IPIMLGLASLTAFFIITTAVL. The segment at 107 to 149 is disordered; the sequence is RAPDPPTPGGTLEGRATAPPAIPTPHPSPSSLVPQTPPEVPAQ. Phosphothreonine occurs at positions 113 and 117. A Phosphoserine modification is found at serine 195.

It is found in the membrane. The protein is Transmembrane protein C16orf54 homolog of Rattus norvegicus (Rat).